The primary structure comprises 87 residues: MTILSAITSISRPNKSSKSVISSNGGSSLSMGSNSVSCFNACGGGSSYSYSSSYSGSGLDYSYKANYSSSTGYNSSVIIASSTCHCS.

Polar residues predominate over residues 1-13 (MTILSAITSISRP). The segment at 1–31 (MTILSAITSISRPNKSSKSVISSNGGSSLSM) is disordered. Low complexity predominate over residues 14-31 (NKSSKSVISSNGGSSLSM).

The protein belongs to the hssA/B family.

This is HssA/B-like protein 58 (hssl58) from Dictyostelium discoideum (Social amoeba).